Here is a 361-residue protein sequence, read N- to C-terminus: Thermostable alkaline protease (361 aa).

An N-terminal signal peptide occupies residues 1–24 (MRQSLKVMVLSTVALLFMANPAAA). Positions 25–93 (SEEKKEYLIV…IEKNAEVTIS (69 aa)) are excised as a propeptide. Q94 provides a ligand contact to Ca(2+). A Peptidase S8 domain is found at 97–360 (PWGISFINTQ…NGLVHAGRAT (264 aa)). Residue D124 is the Charge relay system of the active site. Residue D132 participates in Ca(2+) binding. The active-site Charge relay system is H154. Residues L165, N167, I169, V171, A255, Y257, and V260 each coordinate Ca(2+). S307 serves as the catalytic Charge relay system.

This sequence belongs to the peptidase S8 family. Ca(2+) is required as a cofactor.

The protein localises to the secreted. Shows keratinolytic activity. The sequence is that of Thermostable alkaline protease from Halalkalibacterium halodurans (strain ATCC BAA-125 / DSM 18197 / FERM 7344 / JCM 9153 / C-125) (Bacillus halodurans).